The following is a 648-amino-acid chain: Biosynthetic arginine decarboxylase (648 aa).

Residue Lys109 is modified to N6-(pyridoxal phosphate)lysine. 291-301 (IDVGGGLGIDF) contributes to the substrate binding site.

The protein belongs to the Orn/Lys/Arg decarboxylase class-II family. SpeA subfamily. It depends on Mg(2+) as a cofactor. Requires pyridoxal 5'-phosphate as cofactor.

It carries out the reaction L-arginine + H(+) = agmatine + CO2. Its pathway is amine and polyamine biosynthesis; agmatine biosynthesis; agmatine from L-arginine: step 1/1. Catalyzes the biosynthesis of agmatine from arginine. This chain is Biosynthetic arginine decarboxylase, found in Prochlorococcus marinus (strain AS9601).